We begin with the raw amino-acid sequence, 226 residues long: uncharacterized protein (226 aa).

Belongs to the IIV-6 350L family.

This is an uncharacterized protein from Invertebrate iridescent virus 3 (IIV-3).